A 63-amino-acid polypeptide reads, in one-letter code: Short neurotoxin 2 (63 aa).

Intrachain disulfides connect cysteine 3/cysteine 21, cysteine 15/cysteine 39, cysteine 43/cysteine 49, and cysteine 50/cysteine 55.

Belongs to the three-finger toxin family. Short-chain subfamily. Orphan group XVIII sub-subfamily. Expressed by the venom gland.

The protein resides in the secreted. Functionally, blocks both the muscle-twitch response to nerve stimulation and the response to exogenous acetylcholine. The sequence is that of Short neurotoxin 2 from Bungarus fasciatus (Banded krait).